The primary structure comprises 571 residues: Penton protein (571 aa).

Residues 298 to 324 (DDTEQGGDGAGGGNNSGSGAEENSNAA) are disordered. Residues 303–313 (GGDGAGGGNNS) show a composition bias toward gly residues. The segment covering 314–324 (GSGAEENSNAA) has biased composition (low complexity). A Cell attachment site motif is present at residues 340–342 (RGD). The tract at residues 347–383 (RAEEKRAEAEAAAEAAAPAAQPEVEKPQKKPVIKPLT) is disordered. A compositionally biased stretch (low complexity) spans 356-368 (EAAAEAAAPAAQP). Residue S455 is modified to Phosphoserine; by host.

Belongs to the adenoviridae penton family. In terms of assembly, interacts with the fiber protein (via N-terminal tail region). Interacts with the capsid vertex protein; this interaction binds the penton base to neighboring peripentonal hexons. Interacts (via the cell attachment site RGD) with host heterodimer ITGAV-ITGB5; this interaction promotes virus internalization. Interacts with host WWP1 and WWP2.

The protein localises to the virion. It is found in the host nucleus. Functionally, major capsid protein that self-associates to form penton base pentamers, each in the shape of a pentagon, situated at the 12 vertices of the pseudo T=25 capsid. Involved in virus secondary attachment to host cell after initial attachment by the fiber protein. Binds host integrin heterodimer ITGAV-ITGB5 (alphaV-beta5) thereby triggering clathrin-mediated endocytosis of virions. Mediates initial virus attachment to CXADR-negative cells. Binding to integrins ITGAV-ITGB5 also seems to induce macropinocytosis uptake of the virus. As the virus enters the host cell, penton proteins are shed concomitant with virion acidification in the endosome. The chain is Penton protein from Homo sapiens (Human).